The following is an 808-amino-acid chain: Probable inorganic carbon transporter subunit DabA (808 aa).

Zn(2+)-binding residues include cysteine 334, aspartate 336, histidine 494, and cysteine 509.

The protein belongs to the inorganic carbon transporter (TC 9.A.2) DabA family. In terms of assembly, forms a complex with DabB. Zn(2+) is required as a cofactor.

It is found in the cell inner membrane. Functionally, part of an energy-coupled inorganic carbon pump. This is Probable inorganic carbon transporter subunit DabA from Rhodopseudomonas palustris (strain BisB5).